Here is a 170-residue protein sequence, read N- to C-terminus: Bifunctional protein PyrR (170 aa).

Positions 90 to 102 (LVLIDDVLMSGRT) match the PRPP-binding motif.

This sequence belongs to the purine/pyrimidine phosphoribosyltransferase family. PyrR subfamily.

It carries out the reaction UMP + diphosphate = 5-phospho-alpha-D-ribose 1-diphosphate + uracil. In terms of biological role, regulates the transcription of the pyrimidine nucleotide (pyr) operon in response to exogenous pyrimidines. Also displays a weak uracil phosphoribosyltransferase activity which is not physiologically significant. The polypeptide is Bifunctional protein PyrR (Pseudomonas savastanoi pv. phaseolicola (strain 1448A / Race 6) (Pseudomonas syringae pv. phaseolicola (strain 1448A / Race 6))).